The primary structure comprises 202 residues: Virulence protein F (202 aa).

Over residues methionine 1–alanine 15 the composition is skewed to polar residues. The segment at methionine 1–threonine 21 is disordered. The F-box domain occupies lysine 20 to asparagine 42.

As to quaternary structure, component of SCF(virF) E3 ubiquitin ligase complexes. Interacts with host VIP1 and SKP1A. Interacts with Arabidopsis thaliana ENAP1/VFP3 and VFP5 in the host cell nucleus.

It is found in the host nucleus. Functionally, in the host plant, component of SCF(virF) E3 ubiquitin ligase complexes, which mediate the ubiquitination and subsequent proteasomal degradation of target proteins such as the host VIP1, after its implication in T-DNA translocation to the host nucleus. Required for the formation of tumors of a wild-type size on certain plant species only. This Agrobacterium tumefaciens (strain 15955) protein is Virulence protein F.